We begin with the raw amino-acid sequence, 187 residues long: Epididymal-specific lipocalin-10 (187 aa).

The first 19 residues, 1-19, serve as a signal peptide directing secretion; it reads MRQGLLVLALVLVLVLVLA. Cys90 and Cys163 are oxidised to a cystine. A glycan (N-linked (GlcNAc...) asparagine) is linked at Asn149. Lys170 carries the N6-acetyllysine modification.

This sequence belongs to the calycin superfamily. Lipocalin family.

The protein resides in the secreted. May play a role in male fertility. May act as a retinoid carrier protein within the epididymis. This is Epididymal-specific lipocalin-10 (LCN10) from Homo sapiens (Human).